We begin with the raw amino-acid sequence, 408 residues long: Putative mannan endo-1,4-beta-mannosidase P (408 aa).

An N-terminal signal peptide occupies residues 1–23 (MKCLCFIVLLAIVIAQSYVGVEA). N-linked (GlcNAc...) asparagine glycosylation is present at Asn73. 2 residues coordinate substrate: Trp85 and Asn201. The active-site Proton donor is the Glu202. Glu322 serves as the catalytic Nucleophile. Substrate is bound at residue Trp364.

This sequence belongs to the glycosyl hydrolase 5 (cellulase A) family.

It is found in the secreted. It catalyses the reaction Random hydrolysis of (1-&gt;4)-beta-D-mannosidic linkages in mannans, galactomannans and glucomannans.. In Arabidopsis thaliana (Mouse-ear cress), this protein is Putative mannan endo-1,4-beta-mannosidase P (MANP).